The chain runs to 164 residues: Probable ubiquitin-conjugating enzyme E2 7 (164 aa).

Residues 3-163 (QSSLLLKKQL…VAQCVRRSQE (161 aa)) form the UBC core domain. Cys88 serves as the catalytic Glycyl thioester intermediate.

The protein belongs to the ubiquitin-conjugating enzyme family.

It carries out the reaction S-ubiquitinyl-[E1 ubiquitin-activating enzyme]-L-cysteine + [E2 ubiquitin-conjugating enzyme]-L-cysteine = [E1 ubiquitin-activating enzyme]-L-cysteine + S-ubiquitinyl-[E2 ubiquitin-conjugating enzyme]-L-cysteine.. The protein operates within protein modification; protein ubiquitination. Its function is as follows. Catalyzes the covalent attachment of ubiquitin to other proteins. This Caenorhabditis elegans protein is Probable ubiquitin-conjugating enzyme E2 7 (ubc-7).